The primary structure comprises 253 residues: Polyprenal reductase (253 aa).

The next 4 membrane-spanning stretches (helical) occupy residues 18 to 38 (LSFF…PEFL), 78 to 98 (FLSL…IIFG), 123 to 143 (HYLV…ISLY), and 200 to 220 (IIYS…VWVI).

The protein belongs to the steroid 5-alpha reductase family. Polyprenal reductase subfamily.

It localises to the endoplasmic reticulum membrane. It carries out the reaction a di-trans,poly-cis-dolichal + NADP(+) = a di-trans,poly-cis-polyprenal + NADPH + H(+). It participates in protein modification; protein glycosylation. Plays a key role in early steps of protein N-linked glycosylation by being involved in the conversion of polyprenol into dolichol. Acts as a polyprenal reductase that mediates the reduction of polyprenal into dolichal in a NADP-dependent mechanism. Dolichols are required for the synthesis of dolichol-linked monosaccharides and the oligosaccharide precursor used for N-glycosylation. The chain is Polyprenal reductase from Saccharomyces cerevisiae (strain ATCC 204508 / S288c) (Baker's yeast).